Here is a 221-residue protein sequence, read N- to C-terminus: Glutathione peroxidase 6 (221 aa).

Positions 1-19 (MAQKLWGSCLFSLFMAALA) are cleaved as a signal peptide. Cysteine 73 is a catalytic residue.

Belongs to the glutathione peroxidase family.

Its subcellular location is the secreted. The catalysed reaction is 2 glutathione + H2O2 = glutathione disulfide + 2 H2O. The chain is Glutathione peroxidase 6 (Gpx6) from Mus musculus (Mouse).